The primary structure comprises 318 residues: tRNA pseudouridine synthase B (318 aa).

D54 serves as the catalytic Nucleophile.

The protein belongs to the pseudouridine synthase TruB family. Type 1 subfamily.

It carries out the reaction uridine(55) in tRNA = pseudouridine(55) in tRNA. Responsible for synthesis of pseudouridine from uracil-55 in the psi GC loop of transfer RNAs. The protein is tRNA pseudouridine synthase B of Ralstonia pickettii (strain 12J).